We begin with the raw amino-acid sequence, 99 residues long: Nucleoid-associated protein EbfC (99 aa).

The protein belongs to the YbaB/EbfC family. As to quaternary structure, homodimer.

The protein localises to the cytoplasm. It localises to the nucleoid. In terms of biological role, binds to DNA and alters its conformation. May be involved in regulation of gene expression, nucleoid organization and DNA protection. In Borrelia turicatae (strain 91E135), this protein is Nucleoid-associated protein EbfC.